The sequence spans 47 residues: Large ribosomal subunit protein bL36A (47 aa).

It belongs to the bacterial ribosomal protein bL36 family.

This chain is Large ribosomal subunit protein bL36A, found in Yersinia enterocolitica serotype O:8 / biotype 1B (strain NCTC 13174 / 8081).